The chain runs to 285 residues: Urease accessory protein UreD 1 (285 aa).

This sequence belongs to the UreD family. In terms of assembly, ureD, UreF and UreG form a complex that acts as a GTP-hydrolysis-dependent molecular chaperone, activating the urease apoprotein by helping to assemble the nickel containing metallocenter of UreC. The UreE protein probably delivers the nickel.

It is found in the cytoplasm. Required for maturation of urease via the functional incorporation of the urease nickel metallocenter. The chain is Urease accessory protein UreD 1 from Pseudomonas syringae pv. tomato (strain ATCC BAA-871 / DC3000).